A 185-amino-acid polypeptide reads, in one-letter code: Threonylcarbamoyl-AMP synthase (185 aa).

A YrdC-like domain is found at Asn5 to Arg185.

It belongs to the SUA5 family. TsaC subfamily.

The protein localises to the cytoplasm. It catalyses the reaction L-threonine + hydrogencarbonate + ATP = L-threonylcarbamoyladenylate + diphosphate + H2O. Functionally, required for the formation of a threonylcarbamoyl group on adenosine at position 37 (t(6)A37) in tRNAs that read codons beginning with adenine. Catalyzes the conversion of L-threonine, HCO(3)(-)/CO(2) and ATP to give threonylcarbamoyl-AMP (TC-AMP) as the acyladenylate intermediate, with the release of diphosphate. The chain is Threonylcarbamoyl-AMP synthase from Nitrosococcus oceani (strain ATCC 19707 / BCRC 17464 / JCM 30415 / NCIMB 11848 / C-107).